Here is a 250-residue protein sequence, read N- to C-terminus: Bacteriorhodopsin-I (250 aa).

A run of 7 helical transmembrane segments spans residues 7–27 (EGIWLWLGTAGMFLGMLYFIA), 42–62 (IATILITAIAFVNYLAMALGF), 81–101 (YTDWLFTTPLLLYDLGLLAGA), 114–134 (VLMIGTGVVATLSAGSGVLSA), 139–159 (LVWWGISTAFLLVLLYFLFSS), 185–205 (VWLVYPVWWLVGSEGLGLVGI), and 207–227 (IETAGFMVIDLVAKVGFGIIL). The residue at position 220 (Lys-220) is an N6-(retinylidene)lysine.

The protein belongs to the archaeal/bacterial/fungal opsin family. Post-translationally, the covalent binding of retinal to the apoprotein, bacterioopsin, generates bacteriorhodopsin.

Its subcellular location is the membrane. In terms of biological role, light-driven proton pump. This chain is Bacteriorhodopsin-I (bop), found in Haloarcula marismortui (strain ATCC 43049 / DSM 3752 / JCM 8966 / VKM B-1809) (Halobacterium marismortui).